We begin with the raw amino-acid sequence, 595 residues long: Aspartate--tRNA ligase (595 aa).

Position 171 (Glu171) interacts with L-aspartate. The tract at residues Gln195 to Lys198 is aspartate. Arg217 contributes to the L-aspartate binding site. Residues Arg217–Glu219 and Gln226 contribute to the ATP site. His448 is a binding site for L-aspartate. Glu482 is an ATP binding site. Position 489 (Arg489) interacts with L-aspartate. Residue Gly534–Arg537 participates in ATP binding.

The protein belongs to the class-II aminoacyl-tRNA synthetase family. Type 1 subfamily. Homodimer.

The protein resides in the cytoplasm. The catalysed reaction is tRNA(Asp) + L-aspartate + ATP = L-aspartyl-tRNA(Asp) + AMP + diphosphate. In terms of biological role, catalyzes the attachment of L-aspartate to tRNA(Asp) in a two-step reaction: L-aspartate is first activated by ATP to form Asp-AMP and then transferred to the acceptor end of tRNA(Asp). This Erwinia tasmaniensis (strain DSM 17950 / CFBP 7177 / CIP 109463 / NCPPB 4357 / Et1/99) protein is Aspartate--tRNA ligase.